We begin with the raw amino-acid sequence, 197 residues long: MEAFTTHTGRAVPLRRSNVDTDQIIPAHWLKKVTRDGFEDGLFEAWRKDENFVLNRPERQGASVLVAGPDFGTGSSREHAVWALQNYGFKAVISSRFADIFRGNSLKNGLLTVVLEQSVVDALWELSEADPTAEVTVDLEARQVRAEGITADFELDENARWRLLNGLDDISLTLQNEADIAAYEAARPAFKPRTIAA.

Belongs to the LeuD family. LeuD type 1 subfamily. Heterodimer of LeuC and LeuD.

The catalysed reaction is (2R,3S)-3-isopropylmalate = (2S)-2-isopropylmalate. The protein operates within amino-acid biosynthesis; L-leucine biosynthesis; L-leucine from 3-methyl-2-oxobutanoate: step 2/4. Catalyzes the isomerization between 2-isopropylmalate and 3-isopropylmalate, via the formation of 2-isopropylmaleate. The polypeptide is 3-isopropylmalate dehydratase small subunit (Streptomyces griseus subsp. griseus (strain JCM 4626 / CBS 651.72 / NBRC 13350 / KCC S-0626 / ISP 5235)).